Consider the following 154-residue polypeptide: Ribonuclease H (154 aa).

An RNase H type-1 domain is found at 7-148 (KPETVEIYTD…ADALAREGIA (142 aa)). Mg(2+) contacts are provided by D16, E54, D76, and D140.

The protein belongs to the RNase H family. As to quaternary structure, monomer. It depends on Mg(2+) as a cofactor.

Its subcellular location is the cytoplasm. It carries out the reaction Endonucleolytic cleavage to 5'-phosphomonoester.. In terms of biological role, endonuclease that specifically degrades the RNA of RNA-DNA hybrids. The chain is Ribonuclease H from Paramagnetospirillum magneticum (strain ATCC 700264 / AMB-1) (Magnetospirillum magneticum).